We begin with the raw amino-acid sequence, 256 residues long: Putative bidirectional sugar transporter SWEET7e (256 aa).

Residues 1–9 (MVSPDLIRN) are Extracellular-facing. The chain crosses the membrane as a helical span at residues 10–30 (VVGIVGNAISFGLFLSPVLTF). In terms of domain architecture, MtN3/slv 1 spans 10-97 (VVGIVGNAIS…TIFFLFSNKK (88 aa)). The Cytoplasmic segment spans residues 31-45 (WRIIKEKDMKYFKAD). A helical membrane pass occupies residues 46-66 (PYLATLLNCMLWVFYGLPIVH). Residues 67 to 69 (PNS) lie on the Extracellular side of the membrane. The helical transmembrane segment at 70-90 (ILVVTINGIGLVIEAVYLTIF) threads the bilayer. Residues 91–100 (FLFSNKKNKK) are Cytoplasmic-facing. Residues 101-121 (MGVVLATEALFMAAVALGVLL) form a helical membrane-spanning segment. Residues 122–130 (GAHTHQRRS) lie on the Extracellular side of the membrane. The chain crosses the membrane as a helical span at residues 131–151 (LIVGILCVIFGTIMYSSPLTI). Residues 133–212 (VGILCVIFGT…LMQLILDKNQ (80 aa)) enclose the MtN3/slv 2 domain. Residues 152 to 164 (MSQVVKTKSVEYM) are Cytoplasmic-facing. Residues 165-185 (PLLLSVVSFLNGLCWTSYALI) form a helical membrane-spanning segment. A topological domain (extracellular) is located at residue arginine 186. A helical transmembrane segment spans residues 187–207 (FDIFITIPNGLGVLFTLMQLI). Over 208 to 256 (LDKNQDKNLELPTVAPVAKETSIVTPVSKDDDINGSTASHVIINITKEP) the chain is Cytoplasmic.

The protein belongs to the SWEET sugar transporter family. Forms homooligomers and/or heterooligomers.

The protein resides in the cell membrane. Mediates both low-affinity uptake and efflux of sugar across the plasma membrane. The protein is Putative bidirectional sugar transporter SWEET7e (SWEET7E) of Oryza sativa subsp. japonica (Rice).